Consider the following 196-residue polypeptide: Proteasome subunit beta (196 aa).

Residue methionine 1 is a propeptide, removed in mature form; by autocatalysis. The active-site Nucleophile is threonine 2.

The protein belongs to the peptidase T1B family. The 20S proteasome core is composed of 14 alpha and 14 beta subunits that assemble into four stacked heptameric rings, resulting in a barrel-shaped structure. The two inner rings, each composed of seven catalytic beta subunits, are sandwiched by two outer rings, each composed of seven alpha subunits. The catalytic chamber with the active sites is on the inside of the barrel. Has a gated structure, the ends of the cylinder being occluded by the N-termini of the alpha-subunits. Is capped at one or both ends by the proteasome regulatory ATPase, PAN.

It is found in the cytoplasm. It catalyses the reaction Cleavage of peptide bonds with very broad specificity.. With respect to regulation, the formation of the proteasomal ATPase PAN-20S proteasome complex, via the docking of the C-termini of PAN into the intersubunit pockets in the alpha-rings, triggers opening of the gate for substrate entry. Interconversion between the open-gate and close-gate conformations leads to a dynamic regulation of the 20S proteasome proteolysis activity. Component of the proteasome core, a large protease complex with broad specificity involved in protein degradation. In Nanoarchaeum equitans (strain Kin4-M), this protein is Proteasome subunit beta.